The chain runs to 523 residues: Fidgetin-like protein 1 (523 aa).

The segment at 114 to 154 (PVQQAVKSRPEGQFPESRNNSTKKIDAQQYSSESSSQSGFG) is disordered. The segment covering 141–151 (QQYSSESSSQS) has biased composition (low complexity). Residues Ala253 and 293-298 (GTGKTL) each bind ATP.

The protein belongs to the AAA ATPase family. As to quaternary structure, hexamer. It depends on Mg(2+) as a cofactor.

The catalysed reaction is ATP + H2O = ADP + phosphate + H(+). The protein is Fidgetin-like protein 1 of Drosophila melanogaster (Fruit fly).